Reading from the N-terminus, the 750-residue chain is Protein psiO (750 aa).

An N-terminal signal peptide occupies residues 1-22 (MKEKIKLSLLILTSIILAVANS). Over 23-688 (QTQPKTLAMT…GCNTAAVVST (666 aa)) the chain is Extracellular. A glycan (N-linked (GlcNAc...) asparagine) is linked at Asn-129. A PA14 domain is found at 140 to 286 (QEYFPINGKG…DDYCGVCNGD (147 aa)). Residues Asn-447, Asn-506, Asn-554, Asn-571, and Asn-659 are each glycosylated (N-linked (GlcNAc...) asparagine). Residues 689–709 (AVIAGVTVAAVVGLGIFLYGG) traverse the membrane as a helical segment. The Cytoplasmic portion of the chain corresponds to 710–750 (KKGYDYYQDNKSKGMTGANSNPLYKESGNAGQNPLYNDNNL). The disordered stretch occupies residues 727-750 (ANSNPLYKESGNAGQNPLYNDNNL). Residues 738 to 750 (NAGQNPLYNDNNL) show a composition bias toward polar residues.

This sequence belongs to the prespore-cell-inducing factor family.

It localises to the membrane. This Dictyostelium discoideum (Social amoeba) protein is Protein psiO (psiO).